Consider the following 695-residue polypeptide: Probable glucan endo-1,3-beta-glucosidase btgC (695 aa).

Disordered regions lie at residues Met-1 to Gly-53, Arg-117 to Asn-140, Gly-175 to Ala-258, and Glu-286 to Ser-314. The Cytoplasmic segment spans residues Met-1–Arg-317. Residues Pro-36 to Gly-45 show a composition bias toward polar residues. A compositionally biased stretch (polar residues) spans His-188 to Asn-198. Residues Asn-231–Asp-241 are compositionally biased toward acidic residues. The helical; Signal-anchor for type II membrane protein transmembrane segment at Gly-318–Val-338 threads the bilayer. Residues Gly-339–Ala-695 lie on the Extracellular side of the membrane. A disordered region spans residues Asp-346–Asp-372. Over residues Asp-349–Asp-366 the composition is skewed to low complexity. N-linked (GlcNAc...) asparagine glycosylation is found at Asn-415, Asn-438, and Asn-466. Glu-498 functions as the Proton donor in the catalytic mechanism. Glu-597 acts as the Nucleophile in catalysis. Residue Asn-642 is glycosylated (N-linked (GlcNAc...) asparagine).

It belongs to the glycosyl hydrolase 17 family.

Its subcellular location is the cell membrane. It catalyses the reaction Hydrolysis of (1-&gt;3)-beta-D-glucosidic linkages in (1-&gt;3)-beta-D-glucans.. Glucanases play a role in cell expansion during growth, in cell-cell fusion during mating, and in spore release during sporulation. This enzyme may be involved in beta-glucan degradation. Active on laminarin and lichenan. The chain is Probable glucan endo-1,3-beta-glucosidase btgC (btgC) from Aspergillus clavatus (strain ATCC 1007 / CBS 513.65 / DSM 816 / NCTC 3887 / NRRL 1 / QM 1276 / 107).